Here is a 608-residue protein sequence, read N- to C-terminus: ATP-citrate synthase beta chain protein 2 (608 aa).

ATP is bound by residues 214–234 and 265–291; these read ILRFNNIPQIKMMVVLGELGG and FKSEVQFGHAGAKSGGEMESAQAKNQA. Position 231 (Glu231) interacts with Mg(2+). His273 acts as the Tele-phosphohistidine intermediate in catalysis. 292-302 contributes to the CoA binding site; sequence LIDAGAIVPTS.

Belongs to the succinate/malate CoA ligase alpha subunit family. In terms of assembly, heterooctamer of 4 alpha and 4 beta chains. As to expression, expressed in trichomes, epidermal leaf cells, anther tapetal cells, stigma and in young vascular bundles of expanding leaves, cotyledons, roots, pedicel of flowers and siliques.

Its subcellular location is the cytoplasm. It localises to the cytosol. It catalyses the reaction oxaloacetate + acetyl-CoA + ADP + phosphate = citrate + ATP + CoA. Functionally, ATP citrate-lyase is the primary enzyme responsible for the synthesis of cytosolic acetyl-CoA, used for the elongation of fatty acids and biosynthesis of isoprenoids, flavonoids and malonated derivatives. May supply substrate to the cytosolic acetyl-CoA carboxylase, which generates the malonyl-CoA used for the synthesis of a multitude of compounds, including very long chain fatty acids and flavonoids. Required for normal growth and development and elongation of C18 fatty acids to C20 to C24 fatty acids in seeds. n contrast to all known animal ACL enzymes having a homomeric structure, plant ACLs are composed of alpha and beta chains. This is ATP-citrate synthase beta chain protein 2 from Arabidopsis thaliana (Mouse-ear cress).